Reading from the N-terminus, the 434-residue chain is Adenylosuccinate synthetase (434 aa).

GTP is bound by residues 15–21 (GDEGKGK) and 43–45 (GHT). D16 (proton acceptor) is an active-site residue. Mg(2+) contacts are provided by D16 and G43. Residues 16-19 (DEGK), 41-44 (NAGH), T133, R147, Q228, T243, and R307 contribute to the IMP site. The Proton donor role is filled by H44. 303 to 309 (SVTGRAR) is a binding site for substrate. GTP is bound by residues R309, 335-337 (KLD), and 418-420 (STG).

This sequence belongs to the adenylosuccinate synthetase family. Homodimer. The cofactor is Mg(2+).

The protein localises to the cytoplasm. The enzyme catalyses IMP + L-aspartate + GTP = N(6)-(1,2-dicarboxyethyl)-AMP + GDP + phosphate + 2 H(+). The protein operates within purine metabolism; AMP biosynthesis via de novo pathway; AMP from IMP: step 1/2. Plays an important role in the de novo pathway of purine nucleotide biosynthesis. Catalyzes the first committed step in the biosynthesis of AMP from IMP. In Neisseria meningitidis serogroup C / serotype 2a (strain ATCC 700532 / DSM 15464 / FAM18), this protein is Adenylosuccinate synthetase.